The primary structure comprises 363 residues: Peptide chain release factor 1 (363 aa).

Q237 carries the post-translational modification N5-methylglutamine. The segment covering 284 to 297 has biased composition (basic and acidic residues); sequence ERAKQQSERSEQRR. The tract at residues 284-306 is disordered; sequence ERAKQQSERSEQRRLAVGSGDRS.

It belongs to the prokaryotic/mitochondrial release factor family. In terms of processing, methylated by PrmC. Methylation increases the termination efficiency of RF1.

It localises to the cytoplasm. Peptide chain release factor 1 directs the termination of translation in response to the peptide chain termination codons UAG and UAA. The chain is Peptide chain release factor 1 from Halorhodospira halophila (strain DSM 244 / SL1) (Ectothiorhodospira halophila (strain DSM 244 / SL1)).